The chain runs to 600 residues: DNA mismatch repair protein MutL (600 aa).

Belongs to the DNA mismatch repair MutL/HexB family.

In terms of biological role, this protein is involved in the repair of mismatches in DNA. It is required for dam-dependent methyl-directed DNA mismatch repair. May act as a 'molecular matchmaker', a protein that promotes the formation of a stable complex between two or more DNA-binding proteins in an ATP-dependent manner without itself being part of a final effector complex. The protein is DNA mismatch repair protein MutL of Rickettsia typhi (strain ATCC VR-144 / Wilmington).